The chain runs to 221 residues: Casparian strip membrane protein 3 (221 aa).

Basic and acidic residues predominate over residues 1-12 (MDIEKAGSRREE). The segment at 1-27 (MDIEKAGSRREEEEPIVQRPKLDKGKG) is disordered. At 1–58 (MDIEKAGSRREEEEPIVQRPKLDKGKGKAHVFAPPMNYNRIMDKHKQEKMSPAGWKRG) the chain is on the cytoplasmic side. The helical transmembrane segment at 59–79 (VAIFDFVLRLIAAITAMAAAA) threads the bilayer. Residues 80-109 (KMATTEETLPFFTQFLQFQADYTDLPTMSS) are Extracellular-facing. A helical membrane pass occupies residues 110–130 (FVIVNSIVGGYLTLSLPFSIV). At 131–148 (CILRPLAVPPRLFLILCD) the chain is on the cytoplasmic side. The chain crosses the membrane as a helical span at residues 149–169 (TVMMGLTLMAASASAAIVYLA). Residues 170 to 194 (HNGNSSSNWLPVCQQFGDFCQGTSG) are Extracellular-facing. Asparagine 173 is a glycosylation site (N-linked (GlcNAc...) asparagine). A helical membrane pass occupies residues 195–215 (AVVASFIAATLLMFLVILSAF). At 216 to 221 (ALKRTT) the chain is on the cytoplasmic side.

Belongs to the Casparian strip membrane proteins (CASP) family. As to quaternary structure, homodimer and heterodimers with other CASP proteins. Interacts with CASP1, CASP2, CASP4 and CASP5.

Its subcellular location is the cell membrane. Regulates membrane-cell wall junctions and localized cell wall deposition. Required for establishment of the Casparian strip membrane domain (CSD) and the subsequent formation of Casparian strips, a cell wall modification of the root endodermis that determines an apoplastic barrier between the intraorganismal apoplasm and the extraorganismal apoplasm and prevents lateral diffusion. The protein is Casparian strip membrane protein 3 (CASP3) of Arabidopsis thaliana (Mouse-ear cress).